The sequence spans 128 residues: uncharacterized protein (128 aa).

2 disordered regions span residues 62–83 (LNPS…SPRV) and 101–128 (FAAS…RYQP). Residues 101–114 (FAASSSSTAPVTVT) show a composition bias toward low complexity.

It localises to the cytoplasm. The protein localises to the nucleus. This is an uncharacterized protein from Saccharomyces cerevisiae (strain ATCC 204508 / S288c) (Baker's yeast).